Reading from the N-terminus, the 87-residue chain is Small ribosomal subunit protein bS16 (87 aa).

Belongs to the bacterial ribosomal protein bS16 family.

The chain is Small ribosomal subunit protein bS16 from Ehrlichia chaffeensis (strain ATCC CRL-10679 / Arkansas).